The primary structure comprises 426 residues: Glutamate-1-semialdehyde 2,1-aminomutase (426 aa).

At lysine 265 the chain carries N6-(pyridoxal phosphate)lysine.

Belongs to the class-III pyridoxal-phosphate-dependent aminotransferase family. HemL subfamily. In terms of assembly, homodimer. Pyridoxal 5'-phosphate serves as cofactor.

Its subcellular location is the cytoplasm. It catalyses the reaction (S)-4-amino-5-oxopentanoate = 5-aminolevulinate. It functions in the pathway porphyrin-containing compound metabolism; protoporphyrin-IX biosynthesis; 5-aminolevulinate from L-glutamyl-tRNA(Glu): step 2/2. The polypeptide is Glutamate-1-semialdehyde 2,1-aminomutase (Escherichia coli O127:H6 (strain E2348/69 / EPEC)).